Reading from the N-terminus, the 938-residue chain is Protein NLP3 (938 aa).

Disordered stretches follow at residues 1 to 26 (MEVDPSSSLPGAGEGGGGGIGGGGGD) and 557 to 597 (LADD…KAEK). Over residues 12–26 (AGEGGGGGIGGGGGD) the composition is skewed to gly residues. Basic and acidic residues predominate over residues 580 to 597 (SLHKSNKPPERRRGKAEK). The RWP-RK domain occupies 585 to 666 (NKPPERRRGK…IESVQGSDAA (82 aa)). The stretch at 640–662 (SRKINKVNRSLSKLKQVIESVQG) forms a coiled coil. Residues 743-769 (DKASHSRSSSGEGSINSRTSEASCHGS) are disordered. Low complexity predominate over residues 748–762 (SRSSSGEGSINSRTS). The PB1 domain maps to 847-926 (TVTIKASFKE…HVIRLLVSDV (80 aa)).

It is found in the nucleus. In terms of biological role, probable transcription factor. The polypeptide is Protein NLP3 (NLP3) (Oryza sativa subsp. japonica (Rice)).